The sequence spans 501 residues: Aldehyde dehydrogenase mpl4 (501 aa).

Position 231-236 (231-236) interacts with NAD(+); it reads GSTASG. Residues glutamate 253 and cysteine 287 contribute to the active site.

It belongs to the aldehyde dehydrogenase family.

The catalysed reaction is an aldehyde + NAD(+) + H2O = a carboxylate + NADH + 2 H(+). Its pathway is mycotoxin biosynthesis. Aldehyde dehydrogenase; part of the gene cluster that mediates the biosynthesis of the mycotoxin citrinin, a hepato-nephrotoxic compound to humans due to inhibition of respiration complex III. The pathway begins with the synthesis of a keto-aldehyde intermediate by the citrinin PKS (pksCT) from successive condensations of 4 malonyl-CoA units, presumably with a simple acetyl-CoA starter unit. Release of the keto-aldehyde intermediate is consistent with the presence of the C-terminal reductive release domain. Mp11 collaborates with pksCT by catalyzing the hydrolysis of ACP-bound acyl intermediates to free the ACP from stalled intermediates. Mpl2 then catalyzes the oxidation of the C-12 methyl of the ketone intermediate to an alcohol intermediate which is further oxidized by the oxidoreductase mpl7 to produce a bisaldehyde intermediate. The fourth catalytic step is catalyzed by the mpl4 aldehyde dehydrogenase. The final transformation is the reduction of C-3 by mpl6 to provide the chemically stable citrinin nucleus. The sequence is that of Aldehyde dehydrogenase mpl4 from Monascus purpureus (Red mold).